The primary structure comprises 391 residues: Putative penicillin-binding protein PbpX (391 aa).

The chain crosses the membrane as a helical span at residues 21-40 (GKLLFGLLAVMVCITIWNAL). The tract at residues 44–76 (SEENEPSQETAAVSNTDQKKEVKKKTAKKSEEQ) is disordered. A compositionally biased stretch (polar residues) spans 50–59 (SQETAAVSNT).

Belongs to the beta-lactamase family.

The protein localises to the cell membrane. The chain is Putative penicillin-binding protein PbpX (pbpX) from Bacillus subtilis (strain 168).